Consider the following 31-residue polypeptide: Protamine-1B (31 aa).

Residues 1-31 are disordered; sequence MPRRRRASRRIRRRRRPRVSRRRRRGGRRRR.

In terms of tissue distribution, testis.

Its subcellular location is the nucleus. The protein resides in the chromosome. Functionally, protamines substitute for histones in the chromatin of sperm during the haploid phase of spermatogenesis. They compact sperm DNA into a highly condensed, stable and inactive complex. The protein is Protamine-1B of Oncorhynchus mykiss (Rainbow trout).